A 125-amino-acid polypeptide reads, in one-letter code: Small ribosomal subunit protein eS8 (125 aa).

The disordered stretch occupies residues 1–35 (MQWQGRSVRKPSGGRYHTSQGKKRTEIGRAPAETH).

This sequence belongs to the eukaryotic ribosomal protein eS8 family. As to quaternary structure, part of the 30S ribosomal subunit.

The sequence is that of Small ribosomal subunit protein eS8 from Methanoculleus marisnigri (strain ATCC 35101 / DSM 1498 / JR1).